Reading from the N-terminus, the 192-residue chain is U1 small nuclear ribonucleoprotein C (192 aa).

The segment at 4–36 adopts a Matrin-type zinc-finger fold; it reads YYCEYCDIYLTHSSPVGRRQHNQGRKHISAKIE. Residues 118–192 form a disordered region; it reads PGANKYPNNN…FVNKNSEQPN (75 aa). Over residues 133 to 154 the composition is skewed to polar residues; that stretch reads RISNTPKPYNNYTNKPITNSPY. Low complexity predominate over residues 164-173; that stretch reads NNENSNNFSN. The span at 174–192 shows a compositional bias: polar residues; that stretch reads YQMNKDNSNFVNKNSEQPN.

This sequence belongs to the U1 small nuclear ribonucleoprotein C family. As to quaternary structure, U1 snRNP is composed of the 7 core Sm proteins B/B', D1, D2, D3, E, F and G that assemble in a heptameric protein ring on the Sm site of the small nuclear RNA to form the core snRNP, and at least 3 U1 snRNP-specific proteins U1-70K, U1-A and U1-C. U1-C interacts with U1 snRNA and the 5' splice-site region of the pre-mRNA.

Its subcellular location is the nucleus. In terms of biological role, component of the spliceosomal U1 snRNP, which is essential for recognition of the pre-mRNA 5' splice-site and the subsequent assembly of the spliceosome. U1-C is directly involved in initial 5' splice-site recognition for both constitutive and regulated alternative splicing. The interaction with the 5' splice-site seems to precede base-pairing between the pre-mRNA and the U1 snRNA. Stimulates commitment or early (E) complex formation by stabilizing the base pairing of the 5' end of the U1 snRNA and the 5' splice-site region. The chain is U1 small nuclear ribonucleoprotein C from Plasmodium chabaudi chabaudi.